A 133-amino-acid polypeptide reads, in one-letter code: Glycine cleavage system H protein (133 aa).

Residues 30–112 (TITVGITHHA…YGAGWFFKIK (83 aa)) form the Lipoyl-binding domain. Position 71 is an N6-lipoyllysine (Lys-71).

This sequence belongs to the GcvH family. In terms of assembly, the glycine cleavage system is composed of four proteins: P, T, L and H. Requires (R)-lipoate as cofactor.

Functionally, the glycine cleavage system catalyzes the degradation of glycine. The H protein shuttles the methylamine group of glycine from the P protein to the T protein. In Neisseria gonorrhoeae (strain ATCC 700825 / FA 1090), this protein is Glycine cleavage system H protein.